Consider the following 255-residue polypeptide: 5'-nucleotidase SurE (255 aa).

The a divalent metal cation site is built by Asp-8, Asp-9, Ser-39, and Asn-95.

This sequence belongs to the SurE nucleotidase family. A divalent metal cation serves as cofactor.

Its subcellular location is the cytoplasm. The enzyme catalyses a ribonucleoside 5'-phosphate + H2O = a ribonucleoside + phosphate. Its function is as follows. Nucleotidase that shows phosphatase activity on nucleoside 5'-monophosphates. This chain is 5'-nucleotidase SurE, found in Rubrivivax gelatinosus (strain NBRC 100245 / IL144).